Here is a 541-residue protein sequence, read N- to C-terminus: Glucose-6-phosphate isomerase (541 aa).

E346 (proton donor) is an active-site residue. Active-site residues include H377 and K506.

The protein belongs to the GPI family.

The protein localises to the cytoplasm. The catalysed reaction is alpha-D-glucose 6-phosphate = beta-D-fructose 6-phosphate. Its pathway is carbohydrate biosynthesis; gluconeogenesis. It participates in carbohydrate degradation; glycolysis; D-glyceraldehyde 3-phosphate and glycerone phosphate from D-glucose: step 2/4. Catalyzes the reversible isomerization of glucose-6-phosphate to fructose-6-phosphate. This is Glucose-6-phosphate isomerase from Rhizobium leguminosarum bv. trifolii (strain WSM2304).